The sequence spans 379 residues: MSDQSFDAPVWHNGKALRKGYTTGSCATAAAKVAALMVLRQHLIHQVSIVTPSGVTLCLNVESPHIEGRQAIAAIRKDGGDDVDATHGMLIFARVTLNDSGEITLQGGEGVGTVTRKGIGLPVGSAAINRTPRHTIESVVREAIGPARGADIEIFAPEGEERAQKTYNARLGILGGISIIGTTGIVTPMSEESWKRSLSLELEIKRAAGLERVVLVPGNHGERFVREQMGIDTQVVVTMSNFVGYMIEEAVRLGYRHIVLIGHPGKLIKIAAGIFHTHSHIADARMETLVAHLALLGAPLELLTRVSDCDTTEAAMEHIEAYGFQHIYNHLAQRICMRVMQMLRFTKTPPTCDAIMFSFDNQILGSNRPIEEIVEEMQC.

This sequence belongs to the CbiD family.

The catalysed reaction is Co-precorrin-5B + S-adenosyl-L-methionine = Co-precorrin-6A + S-adenosyl-L-homocysteine. It functions in the pathway cofactor biosynthesis; adenosylcobalamin biosynthesis; cob(II)yrinate a,c-diamide from sirohydrochlorin (anaerobic route): step 6/10. Functionally, catalyzes the methylation of C-1 in cobalt-precorrin-5B to form cobalt-precorrin-6A. This Citrobacter koseri (strain ATCC BAA-895 / CDC 4225-83 / SGSC4696) protein is Cobalt-precorrin-5B C(1)-methyltransferase.